Here is a 1171-residue protein sequence, read N- to C-terminus: ATP-dependent helicase/deoxyribonuclease subunit B (1171 aa).

The region spanning 1-390 is the UvrD-like helicase ATP-binding domain; that stretch reads MSLRFVIGRA…HPLVECIRSA (390 aa). 8 to 15 is a binding site for ATP; the sequence is GRAGSGKS. The region spanning 281 to 587 is the UvrD-like helicase C-terminal domain; sequence MEQPRFHSPA…QFANIPPSLD (307 aa). [4Fe-4S] cluster contacts are provided by cysteine 805, cysteine 1129, cysteine 1132, and cysteine 1138.

This sequence belongs to the helicase family. AddB/RexB type 1 subfamily. As to quaternary structure, heterodimer of AddA and AddB. The cofactor is Mg(2+). It depends on [4Fe-4S] cluster as a cofactor.

Its function is as follows. The heterodimer acts as both an ATP-dependent DNA helicase and an ATP-dependent, dual-direction single-stranded exonuclease. Recognizes the chi site generating a DNA molecule suitable for the initiation of homologous recombination. The AddB subunit has 5' -&gt; 3' nuclease activity but not helicase activity. The sequence is that of ATP-dependent helicase/deoxyribonuclease subunit B from Bacillus cereus (strain ZK / E33L).